A 698-amino-acid chain; its full sequence is MRPMRIFLNDDRHVMAKHSVVYPTQEELEAVQNMVSHTERALKAVSDWIDQQEKDCSGEQEQPEPEEPETTEEGKDSEGKTGENPTRTLRGVMRVGLVAKGLLLKGDLDLELVLLCRDKPTISLLKRVADNLVLQFETVSEDKYEVIQNIREASIVIKNTKEPPLTLNIRLTSPLVREEMEKLSAGETLTVSDPPDVLDRHKCLAALASLRHAKWFQARANGLKSCVIVIRVLRDLCTRVPTWEPLRGWPLELLCEKAIGTANRPMGAGEALRRVLECLSSGILMPDGPGLYDPCEKEASDALEHLERQQREDITQSAQHALRLAAFGQLHKVLGMDPLPTKIPKKTKVETPTIDYTVQIPPSTTYAMPALKRPMEEDGEDKSPSKKKKKIQKKDEKSEPPQAMNALMRLNQLKPGLQYKLISQTGPVHAPIFTMSVEVDEKTFEASGPSKKTAKLHVAVKVLQDMGLPTGMEEKEEATDESEQKPVVQTPAQPADSTQTDSAADQAESAKQQGPILTKHGKNPVMELNEKRRGLKYELISETGGSHDKRFVMEVEVDGVKFQGSGSNKKVAKAYAALAALEKLFPDYTTYAEAPKKKRPPMMPRGGPKFAGKHNQGFGMMYNEVPPPQAMRGRGRGGMNRGRGRGRGGFGGGNHGGYMNSGGYGGGYGGNYNYQTSATAGYSDFFTDCYGYHDFASA.

Residues 5–379 (RIFLNDDRHV…ALKRPMEEDG (375 aa)) enclose the DZF domain. Disordered regions lie at residues 51-88 (QQEKDCSGEQEQPEPEEPETTEEGKDSEGKTGENPTRT), 374-403 (PMEEDGEDKSPSKKKKKIQKKDEKSEPPQA), and 473-522 (EEKE…KHGK). The span at 61-71 (EQPEPEEPETT) shows a compositional bias: acidic residues. 2 stretches are compositionally biased toward basic and acidic residues: residues 72 to 81 (EEGKDSEGKT) and 374 to 384 (PMEEDGEDKSP). The Bipartite nuclear localization signal motif lies at 372-390 (KRPMEEDGEDKSPSKKKKK). The DRBM 1 domain maps to 399–468 (EPPQAMNALM…AVKVLQDMGL (70 aa)). The span at 490 to 503 (TPAQPADSTQTDSA) shows a compositional bias: polar residues. One can recognise a DRBM 2 domain in the interval 520-586 (HGKNPVMELN…ALAALEKLFP (67 aa)).

In terms of assembly, a component of a ybx2/frgy2-containing mRNA-ribonucleoprotein (mRNP) complex. Also a component of the CCAAT box transcription factor (CBTF) complex. Post-translationally, phosphorylated. Phosphorylation affects nuclear translocation. In terms of processing, methylated by protein arginine N-methyltransferase 1 (prmt1b) in the RGG-rich domain. Methylation decreases DNA-binding and thereby decreases transcription of the gata2 gene, but does not regulate dsRNA binding or subcellular localization.

The protein resides in the nucleus. Its subcellular location is the cytoplasm. In terms of biological role, RNA-binding protein that plays an essential role in the biogenesis of circular RNAs (circRNAs) which are produced by back-splicing circularization of pre-mRNAs. Within the nucleus, promotes circRNAs processing by stabilizing the regulatory elements residing in the flanking introns of the circularized exons. Plays thereby a role in the back-splicing of a subset of circRNAs. As a consequence, participates in a wide range of transcriptional and post-transcriptional processes. Binds to poly-U elements and AU-rich elements (AREs) in the 3'-UTR of target mRNAs. Upon viral infection, ILF3 accumulates in the cytoplasm and participates in the innate antiviral response. Mechanistically, ILF3 becomes phosphorylated and activated by the double-stranded RNA-activated protein kinase/PKR which releases ILF3 from cellular mature circRNAs. In turn, unbound ILF3 molecules are able to interact with and thus inhibit viral mRNAs. Has a cytoplasmic role early in development as part of a ribonucleoprotein (mRNP) complex which may regulate mRNA transport and/or translation. Following nuclear localization at the mid-blastula transition, acts as a transcription factor and binds the 5'-CCAAT-3' promoter sequence to regulate transcription of the gata2 gene as a subunit of the CCAAT box transcription factor (CBTF). Its role as an mRNP component negatively regulates its activity as a transcription factor by precluding its nuclear localization. The polypeptide is Interleukin enhancer-binding factor 3 (Xenopus tropicalis (Western clawed frog)).